The primary structure comprises 311 residues: Malate dehydrogenase (311 aa).

Residues 7–13 and Asp34 each bind NAD(+); that span reads GAAGGIG. Positions 81 and 87 each coordinate substrate. Residues Asn94 and 117–119 contribute to the NAD(+) site; that span reads ITN. Substrate-binding residues include Asn119 and Arg153. His177 acts as the Proton acceptor in catalysis. Met227 contacts NAD(+).

It belongs to the LDH/MDH superfamily. MDH type 1 family. Homodimer.

It catalyses the reaction (S)-malate + NAD(+) = oxaloacetate + NADH + H(+). Functionally, catalyzes the reversible oxidation of malate to oxaloacetate. This is Malate dehydrogenase from Shewanella sp. (strain MR-4).